The following is a 719-amino-acid chain: MKQLFATTARGFEELLKVELTDLGAMDCQITQGGVHFHADEETQYRVLLWTRLASRILLPIVTCKVYSDLDLYSAVVGQNWLDYFDEKAHFMVDFNGTNREIRHTQFGAMRVKDGIVDYFERVGKPRPNVDKSQPDIRIHAYLNREELVISLDLSGDALHMRGYREDTGKAPLRETLAAAIVLRSGWQLGTPLMDPMCGSGTLLIEAAQMQANIAPQLHRLHWGFDFWKGHNQQAWDKVKGEAIELAEQTFNQNQKANFYGCDLDHRVLQKAKRNAQNAGVAHLIQWQQGDVAALKNPFVEAKGTVICNPPYGERLGTTPALIALYSVFGQRLKQQFADWNVSIFSGEPALLDCLRLRSHRQFKAKNGPLDCVQKNYHISARATASDENTQNSPEIDRTLTSSQVAVDFANRLQKNSKKIEKWAKQQGINAYRLYDADLPEYNLAVDRYDDHIVVQEYAAPKNIDENKARQRLLDAVTATLQVTGVETNKLILKVRQKQKGTNQYEKLANKGDYFYVNEYGAKLWVNLTDYLDTGLFLDHRLTRKMLGEMAKGKDVLNLFAYTGSATVHMALGGAKSTTTVDMSNTYLNWAEQNLLLNDLEGKQHKLIQADCLQWLARCDRQFDLIFVDPPTFSNSKRMEDSWDVQRDHIKLMTQLKRILRPNGTIVFSNNKRGFKMDVEGLAALGLSAVEISAKTLPLDFERNKQIHNCWVVRLKADL.

A THUMP domain is found at 43 to 154; the sequence is TQYRVLLWTR…REELVISLDL (112 aa).

It belongs to the methyltransferase superfamily. RlmKL family.

The protein resides in the cytoplasm. The catalysed reaction is guanosine(2445) in 23S rRNA + S-adenosyl-L-methionine = N(2)-methylguanosine(2445) in 23S rRNA + S-adenosyl-L-homocysteine + H(+). It carries out the reaction guanosine(2069) in 23S rRNA + S-adenosyl-L-methionine = N(2)-methylguanosine(2069) in 23S rRNA + S-adenosyl-L-homocysteine + H(+). In terms of biological role, specifically methylates the guanine in position 2445 (m2G2445) and the guanine in position 2069 (m7G2069) of 23S rRNA. The protein is Ribosomal RNA large subunit methyltransferase K/L of Pasteurella multocida (strain Pm70).